The primary structure comprises 481 residues: Glutamate--tRNA ligase (481 aa).

The short motif at 11 to 21 is the 'HIGH' region element; that stretch reads PSPTGLLHIGN. The 'KMSKS' region signature appears at 255–259; sequence KLSKR. Lys258 lines the ATP pocket.

Belongs to the class-I aminoacyl-tRNA synthetase family. Glutamate--tRNA ligase type 1 subfamily. Monomer.

It is found in the cytoplasm. It carries out the reaction tRNA(Glu) + L-glutamate + ATP = L-glutamyl-tRNA(Glu) + AMP + diphosphate. Its function is as follows. Catalyzes the attachment of glutamate to tRNA(Glu) in a two-step reaction: glutamate is first activated by ATP to form Glu-AMP and then transferred to the acceptor end of tRNA(Glu). This Streptococcus pyogenes serotype M4 (strain MGAS10750) protein is Glutamate--tRNA ligase.